The chain runs to 609 residues: Dynamin-like protein 2 (609 aa).

The interval 1–16 (MQINLLNDFIKAYENT) is inserts into assembly domain of DLP1, required for tetramerization. Residues 17–25 (YSVSFDDSF) form a linker region. Residues 63-310 (NIAIIGQFSS…FVGIFDRLLN (248 aa)) form the Dynamin-type G domain. A G1 motif region spans residues 68–75 (GQFSSGKS). Residue 72–76 (SGKSS) coordinates GDP. Residues 93–95 (PVT) are G2 motif. The G3 motif stretch occupies residues 158 to 161 (DTPG). The tract at residues 216-219 (NQKD) is G4 motif.

The protein belongs to the TRAFAC class dynamin-like GTPase superfamily. Dynamin/Fzo/YdjA family. In terms of assembly, forms a 2:2 heterotetramer with DLP1. DLP2 forms a central back-to-back dimer flanked on each side by a DLP1 subunit. In the crystal structures the 2 DLP1 subunits are in very different conformations.

The protein localises to the cytoplasm. It is found in the cytosol. The catalysed reaction is GTP + H2O = GDP + phosphate + H(+). Functionally, the heterotetrameric DLP1(2)-DLP2(2) complex tethers liposomes and may mediate their fusion. Initial binding is probably mediated by DLP1, while DLP2 couples DLP1 subunits and increases the effective reach of the complex up to 45 nm. The role of the nucleotide is unknown. This subunit alone very weakly binds to liposomes; GTP, GDP, GMPPCP and GMPPNP do not change heterotetramer binding. Tetramerization is required for GTPase activity, suggesting the GTPase domains (dynamin-type G) from DLP1 and DLP2 must dimerize to reconstitute the GTPase active site. The polypeptide is Dynamin-like protein 2 (Campylobacter jejuni subsp. jejuni serotype O:23/36 (strain 81-176)).